Reading from the N-terminus, the 884-residue chain is DNA mismatch repair protein MutS (884 aa).

601–608 (GPNMSGKS) contacts ATP. The disordered stretch occupies residues 826 to 845 (ESQLSFFGGEQSSKKQDKPL).

The protein belongs to the DNA mismatch repair MutS family.

Its function is as follows. This protein is involved in the repair of mismatches in DNA. It is possible that it carries out the mismatch recognition step. This protein has a weak ATPase activity. This Bacillus cereus (strain ATCC 14579 / DSM 31 / CCUG 7414 / JCM 2152 / NBRC 15305 / NCIMB 9373 / NCTC 2599 / NRRL B-3711) protein is DNA mismatch repair protein MutS.